The primary structure comprises 145 residues: MFNLLKPKGASKRRKIVGRGPGSGLGKTSGRGQKGQKARNTSPRLGFEGGQTPLYRRLPRKGFSNSDYKLEYAIVNLGDIDKKFKDGQVVNYDTLLENKLIKKKNKKIKILSNGKLTKKVSFEVSKISKSAESLVIKIGCTIQLV.

A disordered region spans residues 1 to 52; the sequence is MFNLLKPKGASKRRKIVGRGPGSGLGKTSGRGQKGQKARNTSPRLGFEGGQT. The span at 19–33 shows a compositional bias: gly residues; that stretch reads RGPGSGLGKTSGRGQ.

Belongs to the universal ribosomal protein uL15 family. Part of the 50S ribosomal subunit.

Functionally, binds to the 23S rRNA. This is Large ribosomal subunit protein uL15 from Borreliella burgdorferi (strain ATCC 35210 / DSM 4680 / CIP 102532 / B31) (Borrelia burgdorferi).